The chain runs to 84 residues: Large ribosomal subunit protein bL31B (84 aa).

This sequence belongs to the bacterial ribosomal protein bL31 family. Type B subfamily. In terms of assembly, part of the 50S ribosomal subunit.

Binds the 23S rRNA. This is Large ribosomal subunit protein bL31B from Rhodococcus jostii (strain RHA1).